Here is a 134-residue protein sequence, read N- to C-terminus: ATP synthase epsilon chain (134 aa).

This sequence belongs to the ATPase epsilon chain family. In terms of assembly, F-type ATPases have 2 components, CF(1) - the catalytic core - and CF(0) - the membrane proton channel. CF(1) has five subunits: alpha(3), beta(3), gamma(1), delta(1), epsilon(1). CF(0) has three main subunits: a, b and c.

The protein localises to the cell membrane. Its function is as follows. Produces ATP from ADP in the presence of a proton gradient across the membrane. This is ATP synthase epsilon chain from Ruminococcus albus (strain ATCC 27210 / DSM 20455 / JCM 14654 / NCDO 2250 / 7).